The following is a 334-amino-acid chain: Thiamine-binding periplasmic protein (334 aa).

The N-terminal stretch at 1-23 (MRLLSLLTFSLFAVIGLAPAAQA) is a signal peptide. Thiamine contacts are provided by residues 64-65 (DG), 166-167 (AT), Trp202, and 220-223 (YTTS).

It belongs to the bacterial solute-binding protein 1 family. In terms of assembly, the complex is composed of two ATP-binding proteins (ThiQ), two transmembrane proteins (ThiP) and a solute-binding protein (ThiB).

The protein resides in the periplasm. Its function is as follows. Part of the ABC transporter complex ThiBPQ involved in thiamine import. The sequence is that of Thiamine-binding periplasmic protein (thiB) from Brucella suis biovar 1 (strain 1330).